A 200-amino-acid polypeptide reads, in one-letter code: GTP-binding protein ypt2 (200 aa).

16–23 (GDSGVGKS) is a GTP binding site. The Effector region signature appears at 38–46 (FITTIGIDF). GTP-binding positions include 64–68 (DTAGQ) and 122–125 (NKCD). 2 S-geranylgeranyl cysteine lipidation sites follow: Cys-199 and Cys-200.

The protein belongs to the small GTPase superfamily. Rab family.

It is found in the cell membrane. In terms of biological role, protein transport. Probably involved in vesicular traffic. The chain is GTP-binding protein ypt2 (ypt2) from Schizosaccharomyces pombe (strain 972 / ATCC 24843) (Fission yeast).